We begin with the raw amino-acid sequence, 244 residues long: tRNA (guanine-N(7)-)-methyltransferase (244 aa).

Residues E74, E99, D126, and D149 each coordinate S-adenosyl-L-methionine. D149 is an active-site residue. Substrate-binding positions include K153, D185, and 222-225; that span reads TKFE.

Belongs to the class I-like SAM-binding methyltransferase superfamily. TrmB family.

It catalyses the reaction guanosine(46) in tRNA + S-adenosyl-L-methionine = N(7)-methylguanosine(46) in tRNA + S-adenosyl-L-homocysteine. It functions in the pathway tRNA modification; N(7)-methylguanine-tRNA biosynthesis. In terms of biological role, catalyzes the formation of N(7)-methylguanine at position 46 (m7G46) in tRNA. In Colwellia psychrerythraea (strain 34H / ATCC BAA-681) (Vibrio psychroerythus), this protein is tRNA (guanine-N(7)-)-methyltransferase.